The primary structure comprises 229 residues: PKHD-type hydroxylase BBta_3541 (229 aa).

Positions 78-180 constitute a Fe2OG dioxygenase domain; that stretch reads QIFPPLFNRY…RVASFFWMQS (103 aa). Positions 98, 100, and 161 each coordinate Fe cation. Residue Arg171 coordinates 2-oxoglutarate.

Fe(2+) is required as a cofactor. Requires L-ascorbate as cofactor.

In Bradyrhizobium sp. (strain BTAi1 / ATCC BAA-1182), this protein is PKHD-type hydroxylase BBta_3541.